Reading from the N-terminus, the 293-residue chain is ESX-3 secretion-associated protein EspG3 (293 aa).

Belongs to the EspG family.

Its subcellular location is the cytoplasm. The polypeptide is ESX-3 secretion-associated protein EspG3 (Mycolicibacterium smegmatis (strain ATCC 700084 / mc(2)155) (Mycobacterium smegmatis)).